The chain runs to 53 residues: Sec-independent protein translocase protein TatA (53 aa).

Residues 1-21 (MGMSFSHLLIVLLIIFVLFGA) traverse the membrane as a helical segment.

Belongs to the TatA/E family. The Tat system comprises two distinct complexes: a TatABC complex, containing multiple copies of TatA, TatB and TatC subunits, and a separate TatA complex, containing only TatA subunits. Substrates initially bind to the TatABC complex, which probably triggers association of the separate TatA complex to form the active translocon.

It localises to the cell inner membrane. Its function is as follows. Part of the twin-arginine translocation (Tat) system that transports large folded proteins containing a characteristic twin-arginine motif in their signal peptide across membranes. TatA could form the protein-conducting channel of the Tat system. In Rickettsia akari (strain Hartford), this protein is Sec-independent protein translocase protein TatA.